A 490-amino-acid chain; its full sequence is Coagulation factor X (490 aa).

Residues 1–20 (MANPLHLVLLGAALAGLLLS) form the signal peptide. Residues 21-40 (GSSVFISRRAANDVLARTRR) constitute a propeptide that is removed on maturation. The Gla domain maps to 41–85 (ANSFLEELKKGNLERECMEENCSYEEALEVFEDREKTNEFWNKYV). 4-carboxyglutamate is present on residues Glu-46, Glu-47, Glu-54, Glu-56, Glu-59, and Glu-60. Residues Cys-57 and Cys-62 are joined by a disulfide bond. N-linked (GlcNAc...) asparagine glycosylation is present at Asn-61. A 4-carboxyglutamate mark is found at Glu-65, Glu-66, Glu-69, Glu-72, Glu-75, and Glu-79. An EGF-like 1; calcium-binding domain is found at 86–122 (DGDQCESNPCQNQGTCKDGLGMYTCSCVEGYEGQDCE). Disulfide bonds link Cys-90–Cys-101, Cys-95–Cys-110, Cys-112–Cys-121, Cys-129–Cys-140, Cys-136–Cys-149, Cys-151–Cys-164, Cys-172–Cys-340, Cys-239–Cys-244, Cys-259–Cys-275, Cys-388–Cys-402, and Cys-413–Cys-441. A (3R)-3-hydroxyaspartate modification is found at Asp-103. An EGF-like 2 domain is found at 125–165 (TRKLCSLDNGGCDQFCKEEENSVLCSCASGYTLGDNGKSCI). The interval 183–230 (SPATNSSEGPPEAPGPEQQDDGNLTATENPFNLLDSPEPPPEDDSSSL) is disordered. A propeptide spans 184–232 (PATNSSEGPPEAPGPEQQDDGNLTATENPFNLLDSPEPPPEDDSSSLVR) (activation peptide). Residues Asn-187 and Asn-205 are each glycosylated (N-linked (GlcNAc...) asparagine). Residues 203 to 212 (DGNLTATENP) show a composition bias toward polar residues. The Peptidase S1 domain maps to 233–465 (IVGGQDCRDG…FLKWIEKSMR (233 aa)). Active-site charge relay system residues include His-274 and Asp-320. Ser-417 acts as the Charge relay system in catalysis.

The protein belongs to the peptidase S1 family. In terms of assembly, the two chains are formed from a single-chain precursor by the excision of two Arg residues and are held together by 1 or more disulfide bonds. Forms a heterodimer with SERPINA5. Post-translationally, the vitamin K-dependent, enzymatic carboxylation of some glutamate residues allows the modified protein to bind calcium. In terms of processing, N- and O-glycosylated. Proteolytically cleaved and activated by cathepsin CTSG. The activation peptide is cleaved by factor IXa (in the intrinsic pathway), or by factor VIIa (in the extrinsic pathway). Post-translationally, the iron and 2-oxoglutarate dependent 3-hydroxylation of aspartate and asparagine is (R) stereospecific within EGF domains.

The protein localises to the secreted. The catalysed reaction is Selective cleavage of Arg-|-Thr and then Arg-|-Ile bonds in prothrombin to form thrombin.. Inhibited by SERPINA5. Its function is as follows. Factor Xa is a vitamin K-dependent glycoprotein that converts prothrombin to thrombin in the presence of factor Va, calcium and phospholipid during blood clotting. Factor Xa activates pro-inflammatory signaling pathways in a protease-activated receptor (PAR)-dependent manner. The chain is Coagulation factor X (F10) from Oryctolagus cuniculus (Rabbit).